Consider the following 94-residue polypeptide: MLKLNLQFFASKKGVSSTKNGRDSESKRLGAKRADGQFVTGGSILFRQRGTKIYAGENVGRGGDDTLFAKIDGVVKFERKGRDKKQVSVYAVAE.

Residues 1–9 constitute a propeptide that is removed on maturation; the sequence is MLKLNLQFF. A disordered region spans residues 12 to 32; that stretch reads KKGVSSTKNGRDSESKRLGAK. Residues 20–32 are compositionally biased toward basic and acidic residues; sequence NGRDSESKRLGAK.

The protein belongs to the bacterial ribosomal protein bL27 family. Post-translationally, the N-terminus is cleaved by ribosomal processing cysteine protease Prp.

In Staphylococcus carnosus (strain TM300), this protein is Large ribosomal subunit protein bL27.